A 485-amino-acid polypeptide reads, in one-letter code: DNA polymerase subunit gamma-2 (485 aa).

A disordered region spans residues 28 to 65 (GQPELLTERSSPKGGHVKSHAELEGNGEHPEAPGSGEG). Residue Ser-38 is modified to Phosphoserine. Residues 46 to 58 (SHAELEGNGEHPE) are compositionally biased toward basic and acidic residues.

As to quaternary structure, heterotrimer composed of a catalytic subunit and a homodimer of accessory subunits (POLG:POLG2).

It localises to the mitochondrion. The protein localises to the mitochondrion matrix. The protein resides in the mitochondrion nucleoid. Accessory subunit of DNA polymerase gamma solely responsible for replication of mitochondrial DNA (mtDNA). Acts as an allosteric regulator of the holoenzyme activities. Enhances the polymerase activity and the processivity of POLG by increasing its interactions with the DNA template. Suppresses POLG exonucleolytic proofreading especially toward homopolymeric templates bearing mismatched termini. Binds to single-stranded DNA. The sequence is that of DNA polymerase subunit gamma-2 from Homo sapiens (Human).